The following is a 324-amino-acid chain: MSESNAASVRTVACLLGPTASGKTAAALALAARRPIEIVSVDSALVYRGMDIGTAKPTREERAAVPHHLIDIVDPADAYSAAGFRADALRVVAEIAARGRTPLLAGGTMLYYKALTQGLNDLPAADPDVRATLDAEAARDGWPALHARLASVDPATAARLAPNDAQRIQRALEVYLLTGRPMSALLAAPPRNDDAAAGLRFVPVALEPSDRAVLHARIAARFDAMLEAGFIDEVERLRRRDDLHLGLPSMRCVGYRQAWEYLEGVTDYRMMRDKGIFATRQLCKRQLTWLRAMPARIVVDCCAQDATARAVDALERVLDGRTPA.

17-24 (GPTASGKT) contacts ATP. Residue 19–24 (TASGKT) coordinates substrate. Interaction with substrate tRNA stretches follow at residues 42–45 (DSAL), 166–170 (QRIQR), and 251–256 (RCVGYR).

Belongs to the IPP transferase family. Monomer. Requires Mg(2+) as cofactor.

It carries out the reaction adenosine(37) in tRNA + dimethylallyl diphosphate = N(6)-dimethylallyladenosine(37) in tRNA + diphosphate. In terms of biological role, catalyzes the transfer of a dimethylallyl group onto the adenine at position 37 in tRNAs that read codons beginning with uridine, leading to the formation of N6-(dimethylallyl)adenosine (i(6)A). The protein is tRNA dimethylallyltransferase of Burkholderia thailandensis (strain ATCC 700388 / DSM 13276 / CCUG 48851 / CIP 106301 / E264).